Reading from the N-terminus, the 489-residue chain is Lysine--tRNA ligase (489 aa).

Residues E399 and E406 each contribute to the Mg(2+) site.

Belongs to the class-II aminoacyl-tRNA synthetase family. As to quaternary structure, homodimer. Requires Mg(2+) as cofactor.

The protein resides in the cytoplasm. The enzyme catalyses tRNA(Lys) + L-lysine + ATP = L-lysyl-tRNA(Lys) + AMP + diphosphate. The sequence is that of Lysine--tRNA ligase (lysS) from Mycoplasma pneumoniae (strain ATCC 29342 / M129 / Subtype 1) (Mycoplasmoides pneumoniae).